The sequence spans 271 residues: Tumor necrosis factor receptor superfamily member 4 (271 aa).

The first 19 residues, 1 to 19 (MYVWVQQPTAFLLLGLSLG), serve as a signal peptide directing secretion. At 20–210 (VTVKLNCVKD…TPTLVAPEGP (191 aa)) the chain is on the extracellular side. 2 TNFR-Cys repeats span residues 25-60 (NCVK…TVCH) and 61-102 (PCEP…DTVC). Cystine bridges form between cysteine 26–cysteine 37, cysteine 38–cysteine 51, cysteine 41–cysteine 59, cysteine 62–cysteine 76, cysteine 79–cysteine 94, cysteine 82–cysteine 102, cysteine 104–cysteine 122, and cysteine 125–cysteine 138. Residues 103–123 (QCRPGTQPRQDSSHKLGVDCV) form a TNFR-Cys 3; truncated repeat. Residues 124 to 164 (PCPPGHFSPGSNQACKPWTNCTLSGKQIRHPASNSLDTVCE) form a TNFR-Cys 4 repeat. N-linked (GlcNAc...) asparagine glycosylation is present at asparagine 143. Cysteine 144 and cysteine 163 are oxidised to a cystine. The helical transmembrane segment at 211–235 (AFAVILGLGLGLLAPLTVLLALYLL) threads the bilayer. The Cytoplasmic segment spans residues 236-271 (RKAWRSPNTPKPCWGNSFRTPIQEEQTDTHFTLAKI).

In terms of assembly, interacts with TRAF2, TRAF3 and TRAF5. In terms of tissue distribution, activated T-cells.

The protein resides in the membrane. In terms of biological role, receptor for TNFSF4/OX40L/GP34. Is a costimulatory molecule implicated in long-term T-cell immunity. The protein is Tumor necrosis factor receptor superfamily member 4 (Tnfrsf4) of Rattus norvegicus (Rat).